A 233-amino-acid polypeptide reads, in one-letter code: Cilia- and flagella-associated protein 299 (233 aa).

The protein resides in the cytoplasm. It localises to the nucleus. Functionally, may be involved in spermatogenesis. This Homo sapiens (Human) protein is Cilia- and flagella-associated protein 299.